The sequence spans 493 residues: Dipeptide and tripeptide permease B (493 aa).

Topologically, residues 1–27 are cytoplasmic; the sequence is MERSTPTGLLQQPKPFFMIFFVELWER. The helical transmembrane segment at 28 to 48 threads the bilayer; sequence FGYYGVQGILAVFFVQQLGFS. The Periplasmic segment spans residues 49–52; the sequence is QEQA. Residues 53–73 traverse the membrane as a helical segment; the sequence is FVTFGAFAALVYGLISIGGYV. Over 74–82 the chain is Cytoplasmic; that stretch reads GDHLLGTKR. A helical transmembrane segment spans residues 83 to 103; the sequence is TMVLGAVVLAAGYFATGLSLY. The Periplasmic segment spans residues 104 to 106; the sequence is QPN. A helical transmembrane segment spans residues 107–127; the sequence is LIFFALGTIAVGNGLFKANPA. Residues 128–146 lie on the Cytoplasmic side of the membrane; that stretch reads SLLSKCYPPKDPRLDGAFT. A helical membrane pass occupies residues 147–167; the sequence is LFYMSINIGSLLSLSLAPVIA. Topologically, residues 168–169 are periplasmic; it reads ER. The helical transmembrane segment at 170–190 threads the bilayer; the sequence is FGYTVTYYLCGIGLIFALLVY. The Cytoplasmic segment spans residues 191 to 212; it reads FCCRHMVRHIGSEPDTKPLNWR. The next 2 membrane-spanning stretches (helical) occupy residues 213 to 233 and 234 to 254; these read NLLLVLLGSAVMICVCAWLMN and HVFIANLVLIALSLIVVFIFF. Topologically, residues 255–267 are cytoplasmic; that stretch reads REASKQDRLGRNK. A helical transmembrane segment spans residues 268-288; the sequence is MFVAFILMIEAIVFYVLYAQM. Over 289–311 the chain is Periplasmic; the sequence is PTSLNFFAINNVHHEILGFSINP. The chain crosses the membrane as a helical span at residues 312–332; the sequence is VSFQALNPFWVVVASPILASI. Over 333-350 the chain is Cytoplasmic; it reads YTRLGSQNRDLSMPAKFT. Residues 351 to 371 form a helical membrane-spanning segment; that stretch reads LGMFLCSLGFLTAAAAGMWFA. At 372–379 the chain is on the periplasmic side; that stretch reads DAQGLTSP. A helical membrane pass occupies residues 380-400; sequence WFIVLVYLFQSLGELMISALG. At 401 to 424 the chain is on the cytoplasmic side; sequence LAMVAALVPQYLMGFILGMWFLTQ. A helical transmembrane segment spans residues 425-445; the sequence is AASFLIGGYVATFTATPEGMT. At 446–456 the chain is on the periplasmic side; sequence DPLETLPIYTD. A helical membrane pass occupies residues 457–477; the sequence is VFGKIGMVTLVIALVMALLIP. Topologically, residues 478–493 are cytoplasmic; it reads WLNRMINSSAAEDAVA.

Belongs to the major facilitator superfamily. Proton-dependent oligopeptide transporter (POT/PTR) (TC 2.A.17) family. DtpB subfamily.

It localises to the cell inner membrane. Its function is as follows. Proton-dependent permease that transports di- and tripeptides. The polypeptide is Dipeptide and tripeptide permease B (Yersinia enterocolitica serotype O:8 / biotype 1B (strain NCTC 13174 / 8081)).